Here is a 772-residue protein sequence, read N- to C-terminus: Phosphatidylinositol 4-phosphate 5-kinase 5 (772 aa).

The tract at residues 22 to 56 (AKKRANSVFGTVSVAPHTDNDTTTDDNDDETTTNR) is disordered. Acidic residues predominate over residues 43–52 (TTTDDNDDET). 8 MORN repeats span residues 75 to 97 (YTGQ…DGCM), 98 to 120 (YIGD…SGAT), 121 to 143 (YEGE…SGDA), 144 to 166 (YKGQ…NGDA), 167 to 189 (YDGE…DGSY), 190 to 212 (YIGE…NGNR), 213 to 235 (YDGF…NGSF), and 236 to 257 (YVGH…SGNE). The 392-residue stretch at 377 to 768 (SKGHRNYELM…RFRDFIFKVF (392 aa)) folds into the PIPK domain. The tract at residues 646–665 (SGARTPIGESEEESGPRLSR) is disordered. Residues 728–749 (YDISKKLEHAYKSIQYDPSSIS) are activation loop.

The catalysed reaction is a 1,2-diacyl-sn-glycero-3-phospho-(1D-myo-inositol 4-phosphate) + ATP = a 1,2-diacyl-sn-glycero-3-phospho-(1D-myo-inositol-4,5-bisphosphate) + ADP + H(+). The chain is Phosphatidylinositol 4-phosphate 5-kinase 5 (PIP5K5) from Arabidopsis thaliana (Mouse-ear cress).